Reading from the N-terminus, the 540-residue chain is Thiamine biosynthetic bifunctional enzyme (540 aa).

Positions 1 to 238 (MVFTKEEVDY…LDATRYQFVE (238 aa)) are thiamine-phosphate synthase. Residues 43–47 (QIREK) and Asn-75 contribute to the 4-amino-2-methyl-5-(diphosphooxymethyl)pyrimidine site. 2 residues coordinate Mg(2+): Asp-76 and Asp-95. Ser-114 lines the 4-amino-2-methyl-5-(diphosphooxymethyl)pyrimidine pocket. 143 to 145 (TST) provides a ligand contact to 2-[(2R,5Z)-2-carboxy-4-methylthiazol-5(2H)-ylidene]ethyl phosphate. Lys-146 serves as a coordination point for 4-amino-2-methyl-5-(diphosphooxymethyl)pyrimidine. 2-[(2R,5Z)-2-carboxy-4-methylthiazol-5(2H)-ylidene]ethyl phosphate contacts are provided by residues Gly-181 and 209 to 210 (VS). Positions 239–540 (CELNNTFPTT…KWSASLKKFK (302 aa)) are hydroxyethylthiazole kinase. Met-290 is a 5-(2-hydroxyethyl)-4-methylthiazole binding site. The ATP site is built by Lys-365 and Thr-415. Residue Ala-462 participates in 5-(2-hydroxyethyl)-4-methylthiazole binding. Cys-465 (proton acceptor; for hydroxyethylthiazole kinase activity) is an active-site residue.

The protein in the N-terminal section; belongs to the thiamine-phosphate synthase family. This sequence in the C-terminal section; belongs to the Thz kinase family. Homooctamer. Mg(2+) serves as cofactor.

It catalyses the reaction 2-[(2R,5Z)-2-carboxy-4-methylthiazol-5(2H)-ylidene]ethyl phosphate + 4-amino-2-methyl-5-(diphosphooxymethyl)pyrimidine + 2 H(+) = thiamine phosphate + CO2 + diphosphate. The enzyme catalyses 2-(2-carboxy-4-methylthiazol-5-yl)ethyl phosphate + 4-amino-2-methyl-5-(diphosphooxymethyl)pyrimidine + 2 H(+) = thiamine phosphate + CO2 + diphosphate. The catalysed reaction is 4-methyl-5-(2-phosphooxyethyl)-thiazole + 4-amino-2-methyl-5-(diphosphooxymethyl)pyrimidine + H(+) = thiamine phosphate + diphosphate. It carries out the reaction 5-(2-hydroxyethyl)-4-methylthiazole + ATP = 4-methyl-5-(2-phosphooxyethyl)-thiazole + ADP + H(+). The protein operates within cofactor biosynthesis; thiamine diphosphate biosynthesis; 4-methyl-5-(2-phosphoethyl)-thiazole from 5-(2-hydroxyethyl)-4-methylthiazole: step 1/1. Its pathway is cofactor biosynthesis; thiamine diphosphate biosynthesis; thiamine phosphate from 4-amino-2-methyl-5-diphosphomethylpyrimidine and 4-methyl-5-(2-phosphoethyl)-thiazole: step 1/1. Essential for thiamine biosynthesis. The kinase activity is involved in the salvage synthesis of TH-P from the thiazole. In terms of biological role, condenses 4-methyl-5-(beta-hydroxyethyl)thiazole monophosphate (THZ-P) and 2-methyl-4-amino-5-hydroxymethyl pyrimidine pyrophosphate (HMP-PP) to form thiamine monophosphate (TMP). This chain is Thiamine biosynthetic bifunctional enzyme (THI6), found in Saccharomyces cerevisiae (strain ATCC 204508 / S288c) (Baker's yeast).